We begin with the raw amino-acid sequence, 139 residues long: UPF0102 protein Caul_0175 (139 aa).

The protein belongs to the UPF0102 family.

This is UPF0102 protein Caul_0175 from Caulobacter sp. (strain K31).